Reading from the N-terminus, the 130-residue chain is Anti-adapter protein IraD (130 aa).

Belongs to the GpW/Gp25 family. IraD subfamily. As to quaternary structure, interacts with RssB.

It is found in the cytoplasm. Its function is as follows. Inhibits RpoS proteolysis by regulating RssB activity, thereby increasing the stability of the sigma stress factor RpoS during oxidative stress. Its effect on RpoS stability is due to its interaction with RssB, which probably blocks the interaction of RssB with RpoS, and the consequent delivery of the RssB-RpoS complex to the ClpXP protein degradation pathway. This Escherichia coli O9:H4 (strain HS) protein is Anti-adapter protein IraD.